We begin with the raw amino-acid sequence, 748 residues long: Signal transducer and activator of transcription 4 (748 aa).

The region spanning 569–664 (WIDGYVMGFV…ENPLKYLYPD (96 aa)) is the SH2 domain. The residue at position 667 (Lys-667) is an N6-acetyllysine. Position 693 is a phosphotyrosine; by JAK (Tyr-693). Ser-721 bears the Phosphoserine; by MAP2K6 mark.

Belongs to the transcription factor STAT family. As to quaternary structure, forms a homodimer or a heterodimer with a related family member. Interacts with ARL2BP. The SH2 domain interacts, in vitro, with IL12RB2 via a short cytoplasmic domain. Interacts with STAT1. Interacts with JUN; this complex efficiently interacts with the AP-1-related sequence of the IFN-gamma. Acetylation at Lys-667 is required for JAK2-mediated phosphorylation and activation of STAT4. In terms of processing, tyrosine phosphorylated upon IL12 and IFN-alpha activation, but not by IFN-gamma in T-lymphocytes and NK cells. Serine phosphorylation is required for maximal transcriptional activity but not for DNA binding. Phosphorylation by MAP2K6 at Ser-721 is required for full transcriptional activity induced by IL12. However this serine phosphorylation is not required for cell proliferation although critical for IFN-gamma production.

Its subcellular location is the cytoplasm. The protein localises to the nucleus. Its function is as follows. Transcriptional regulator mainly expressed in hematopoietic cells that plays a critical role in cellular growth, differentiation and immune response. Plays a key role in the differentiation of T-helper 1 cells and the production of interferon-gamma. Also participates in multiple neutrophil functions including chemotaxis and production of the neutrophil extracellular traps. After IL12 binding to its receptor IL12RB2, STAT4 interacts with the intracellular domain of IL12RB2 and becomes tyrosine phosphorylated. Phosphorylated STAT4 then homodimerizes and migrates to the nucleus where it can recognize STAT target sequences present in IL12 responsive genes. Although IL12 appears to be the predominant activating signal, STAT4 can also be phosphorylated and activated in response to IFN-gamma stimulation via JAK1 and TYK2 and in response to different interleukins including IL23, IL2 and IL35. Transcription activation of IFN-gamma gene is mediated by interaction with JUN that forms a complex that efficiently interacts with the AP-1-related sequence of the IFN-gamma promoter. In response to IFN-alpha/beta signaling, acts as a transcriptional repressor and suppresses IL5 and IL13 mRNA expression during response to T-cell receptor (TCR) activation. This Homo sapiens (Human) protein is Signal transducer and activator of transcription 4 (STAT4).